The sequence spans 339 residues: Phenylalanine--tRNA ligase alpha subunit (339 aa).

Position 254 (glutamate 254) interacts with Mg(2+).

This sequence belongs to the class-II aminoacyl-tRNA synthetase family. Phe-tRNA synthetase alpha subunit type 1 subfamily. As to quaternary structure, tetramer of two alpha and two beta subunits. The cofactor is Mg(2+).

The protein localises to the cytoplasm. The catalysed reaction is tRNA(Phe) + L-phenylalanine + ATP = L-phenylalanyl-tRNA(Phe) + AMP + diphosphate + H(+). This Clostridium perfringens (strain ATCC 13124 / DSM 756 / JCM 1290 / NCIMB 6125 / NCTC 8237 / Type A) protein is Phenylalanine--tRNA ligase alpha subunit.